The sequence spans 240 residues: Aliphatic sulfonates import ATP-binding protein SsuB 2 (240 aa).

Residues 2–218 (VRTRELRRGF…RHSAPEFIHA (217 aa)) enclose the ABC transporter domain. 34-41 (GRSGSGKS) is an ATP binding site.

This sequence belongs to the ABC transporter superfamily. Aliphatic sulfonates importer (TC 3.A.1.17.2) family. The complex is composed of two ATP-binding proteins (SsuB), two transmembrane proteins (SsuC) and a solute-binding protein (SsuA).

It localises to the cell membrane. It carries out the reaction ATP + H2O + aliphatic sulfonate-[sulfonate-binding protein]Side 1 = ADP + phosphate + aliphatic sulfonateSide 2 + [sulfonate-binding protein]Side 1.. In terms of biological role, part of the ABC transporter complex SsuABC involved in aliphatic sulfonates import. Responsible for energy coupling to the transport system. The protein is Aliphatic sulfonates import ATP-binding protein SsuB 2 of Nocardia farcinica (strain IFM 10152).